Here is a 407-residue protein sequence, read N- to C-terminus: Arginine biosynthesis bifunctional protein ArgJ (407 aa).

Positions 155, 181, 192, 278, 402, and 407 each coordinate substrate. Catalysis depends on threonine 192, which acts as the Nucleophile.

Belongs to the ArgJ family. In terms of assembly, heterotetramer of two alpha and two beta chains.

The protein localises to the cytoplasm. It carries out the reaction N(2)-acetyl-L-ornithine + L-glutamate = N-acetyl-L-glutamate + L-ornithine. The enzyme catalyses L-glutamate + acetyl-CoA = N-acetyl-L-glutamate + CoA + H(+). It functions in the pathway amino-acid biosynthesis; L-arginine biosynthesis; L-ornithine and N-acetyl-L-glutamate from L-glutamate and N(2)-acetyl-L-ornithine (cyclic): step 1/1. The protein operates within amino-acid biosynthesis; L-arginine biosynthesis; N(2)-acetyl-L-ornithine from L-glutamate: step 1/4. In terms of biological role, catalyzes two activities which are involved in the cyclic version of arginine biosynthesis: the synthesis of N-acetylglutamate from glutamate and acetyl-CoA as the acetyl donor, and of ornithine by transacetylation between N(2)-acetylornithine and glutamate. This Thiobacillus denitrificans (strain ATCC 25259 / T1) protein is Arginine biosynthesis bifunctional protein ArgJ.